The primary structure comprises 426 residues: D-ribulose kinase (426 aa).

Residues Asp-8, 12-15 (SGAR), Ser-72, and Asp-221 each bind substrate. ATP contacts are provided by residues Ser-243, Gly-281, and 376 to 380 (GGAKN).

Belongs to the FGGY kinase family. The cofactor is a divalent metal cation.

It catalyses the reaction D-ribulose + ATP = D-ribulose 5-phosphate + ADP + H(+). Its function is as follows. Exhibits ATP hydrolysis without substrate. Phosphorylates D-ribulose. The chain is D-ribulose kinase from Synechococcus elongatus (strain ATCC 33912 / PCC 7942 / FACHB-805) (Anacystis nidulans R2).